The sequence spans 352 residues: Sphingosine 1-phosphate receptor 2 (352 aa).

At 1–34 the chain is on the extracellular side; sequence MGGLYSEYLNPEKVQEHYNYTKETLDMQETPSRK. N-linked (GlcNAc...) asparagine glycosylation occurs at Asn19. The helical transmembrane segment at 35-59 threads the bilayer; sequence VASAFIIILCCAIVVENLLVLIAVA. The Cytoplasmic portion of the chain corresponds to 60–66; sequence RNSKFHS. The chain crosses the membrane as a helical span at residues 67-95; the sequence is AMYLFLGNLAASDLLAGVAFVANTLLSGP. The Extracellular segment spans residues 96-109; it reads VTLSLTPLQWFARE. A helical membrane pass occupies residues 110–128; the sequence is GSAFITLSASVFSLLAIAI. Over 129–147 the chain is Cytoplasmic; the sequence is ERQVAIAKVKLYGSDKSCR. Residues 148 to 173 form a helical membrane-spanning segment; it reads MLMLIGASWLISLILGGLPILGWNCL. Topologically, residues 174–189 are extracellular; sequence DHLEACSTVLPLYAKH. Residues 190 to 210 traverse the membrane as a helical segment; it reads YVLCVVTIFSVILLAIVALYV. The Cytoplasmic segment spans residues 211–233; sequence RIYFVVRSSHADVAGPQTLALLK. Residues 234-255 traverse the membrane as a helical segment; it reads TVTIVLGVFIICWLPAFSILLL. The Extracellular portion of the chain corresponds to 256–271; the sequence is DSTCPVRACPVLYKAH. A helical membrane pass occupies residues 272–292; that stretch reads YFFAFATLNSLLNPVIYTWRS. The Cytoplasmic portion of the chain corresponds to 293–352; sequence RDLRREVLRPLLCWRQGKGATGRRGGNPGHRLLPLRSSSSLERGLHMPTSPTFLEGNTVV. Cys305 carries S-palmitoyl cysteine lipidation.

The protein belongs to the G-protein coupled receptor 1 family. Expressed in all developing tissues with highest levels detected in primitive, transformed cells. Relative abundance: lung &gt; kidney = skin = gut &gt; spleen &gt; brain &gt; liver.

The protein localises to the cell membrane. Its function is as follows. Receptor for the lysosphingolipid sphingosine 1-phosphate (S1P). S1P is a bioactive lysophospholipid that elicits diverse physiological effects on most types of cells and tissues. Receptor for the chemokine-like protein FAM19A5. Mediates the inhibitory effect of FAM19A5 on vascular smooth muscle cell proliferation and migration. In lymphoid follicles, couples the binding of S1P to the activation of GNA13 and downstream inhibition of AKT activation leading to suppression of germinal center (GC) B cell growth and migration outside the GC niche. The polypeptide is Sphingosine 1-phosphate receptor 2 (S1pr2) (Rattus norvegicus (Rat)).